Reading from the N-terminus, the 326-residue chain is Protein TMED8 (326 aa).

Residues 1–99 (MSDRQAAEGP…EGQAPGEQAA (99 aa)) form a disordered region. Residues 50–65 (SSPLASASDPAAESSP) show a composition bias toward low complexity. In terms of domain architecture, GOLD spans 160–324 (PPCVWTFAKV…NKTLYFHIYY (165 aa)). N6-acetyllysine is present on lysine 170. The disordered stretch occupies residues 234 to 268 (VQVSDSSEDEEEEEDEEEEIEEPVPVGDVERGSRS). Residues 239-255 (SSEDEEEEEDEEEEIEE) are compositionally biased toward acidic residues.

In Mus musculus (Mouse), this protein is Protein TMED8 (Tmed8).